A 28-amino-acid polypeptide reads, in one-letter code: Beta-bungarotoxin B chain-like (28 aa).

The N-terminal stretch at 1 to 24 is a signal peptide; sequence MSSGGLLLLLGLLTLCAELTPVSS.

Heterodimer; disulfide-linked. The A chains have phospholipase A2 activity and the B chains show homology with the basic protease inhibitors. In terms of tissue distribution, expressed by the venom gland.

It localises to the secreted. Functionally, beta-1-bungarotoxin is a presynaptic neurotoxin of the venom. The B chain is homologous to venom basic protease inhibitors but has no protease inhibitor activity and blocks voltage-gated potassium channels (Kv). This Bungarus multicinctus (Many-banded krait) protein is Beta-bungarotoxin B chain-like.